The following is a 60-amino-acid chain: Metallothionein (60 aa).

Residue Met-1 is modified to N-acetylmethionine. A beta region spans residues 1–28 (MDPCECSKTGTCNCGGSCTCKNCSCTTC). Residues Cys-4, Cys-6, Cys-12, Cys-14, Cys-18, Cys-20, Cys-23, Cys-25, Cys-28, Cys-32, Cys-33, Cys-35, Cys-36, Cys-40, Cys-43, Cys-47, Cys-49, Cys-54, Cys-58, and Cys-59 each coordinate a divalent metal cation. The alpha stretch occupies residues 29–60 (NKSCCPCCPSGCPKCASGCVCKGKTCDTSCCQ).

This sequence belongs to the metallothionein superfamily. Type 1 family.

In terms of biological role, metallothioneins have a high content of cysteine residues that bind various heavy metals. The protein is Metallothionein (mt) of Pleuronectes platessa (European plaice).